We begin with the raw amino-acid sequence, 321 residues long: ATP-dependent 6-phosphofructokinase (321 aa).

G12 lines the ATP pocket. ADP contacts are provided by residues 22–26 (RGVVR) and 55–60 (RYSVSD). Residues 73 to 74 (RF) and 103 to 106 (GDGS) contribute to the ATP site. D104 is a binding site for Mg(2+). 127–129 (TID) provides a ligand contact to substrate. D129 acts as the Proton acceptor in catalysis. An ADP-binding site is contributed by R156. Residues R164 and 171–173 (MGR) contribute to the substrate site. ADP-binding positions include 187 to 189 (GCE), R213, and 215 to 217 (KRH). Substrate is bound by residues E224, R245, and 251 to 254 (HIQR).

This sequence belongs to the phosphofructokinase type A (PFKA) family. ATP-dependent PFK group I subfamily. Prokaryotic clade 'B1' sub-subfamily. As to quaternary structure, homotetramer. The cofactor is Mg(2+).

The protein localises to the cytoplasm. The catalysed reaction is beta-D-fructose 6-phosphate + ATP = beta-D-fructose 1,6-bisphosphate + ADP + H(+). The protein operates within carbohydrate degradation; glycolysis; D-glyceraldehyde 3-phosphate and glycerone phosphate from D-glucose: step 3/4. With respect to regulation, allosterically activated by ADP and other diphosphonucleosides, and allosterically inhibited by phosphoenolpyruvate. In terms of biological role, catalyzes the phosphorylation of D-fructose 6-phosphate to fructose 1,6-bisphosphate by ATP, the first committing step of glycolysis. This is ATP-dependent 6-phosphofructokinase from Haemophilus influenzae (strain PittEE).